The primary structure comprises 645 residues: Zinc finger protein 64 (645 aa).

C2H2-type zinc fingers lie at residues 175-197 (HKCEVCGKCFSRKDKLKTHMRCH), 203-225 (YKCKTCDYAAADSSSLNKHLRIH), and 231-253 (FKCQICPYASRNSSQLTVHLRSH). E286 participates in a covalent cross-link: Glycyl lysine isopeptide (Lys-Gly) (interchain with G-Cter in SUMO2). The C2H2-type 4; atypical zinc finger occupies 299–324 (FNCCYPGCHFKTVHGMKDLDRHLRIH). 9 C2H2-type zinc fingers span residues 330–352 (HKCEFCDKCFSRKDNLTMHMRCH), 358–380 (HKCHLCDYAAVDSSSLKKHLRIH), 386–408 (YKCQLCPYASRNSSQLTVHLRSH), 414–436 (FQCWLCSAKFKISSDLKRHMIVH), 442–465 (FKCEFCDVRCTMKANLKSHIRIKH), 467–489 (FKCLHCAFQGRDRADLLEHSRLH), 495–517 (EKCPECSYSCSSAAALRVHSRVH), 523–546 (FKCDFCSFDTKRPSSLAKHVDKVH), and 580–602 (FRCETCGASFVRDDSLRCHKKQH). Residue N397 forms a Glycyl lysine isopeptide (Lys-Gly) (interchain with G-Cter in SUMO2) linkage. 2 stretches are compositionally biased toward basic and acidic residues: residues 543 to 554 (DKVHRDEAKTEN) and 600 to 610 (KQHSDQSENKN). 2 disordered regions span residues 543-567 (DKVHRDEAKTENRAPLGKEGLREGS) and 600-645 (KQHS…SQDL). The residue at position 545 (V545) is a Phosphoserine. A compositionally biased stretch (polar residues) spans 622–631 (ASGQLSTLVS).

This sequence belongs to the krueppel C2H2-type zinc-finger protein family. As to quaternary structure, interacts with ZNF70; this interaction promote the transactivation of the HES1 gene. Interacts with NOTCH1.

It is found in the nucleus. Its function is as follows. May be involved in the regulation of mesenchymal cell differentiation through transactivation of NOTCH1 target genes. This chain is Zinc finger protein 64, found in Homo sapiens (Human).